The chain runs to 226 residues: Cytidylate kinase (226 aa).

10–18 is a binding site for ATP; sequence GPASSGKST.

This sequence belongs to the cytidylate kinase family. Type 1 subfamily.

It localises to the cytoplasm. The catalysed reaction is CMP + ATP = CDP + ADP. It catalyses the reaction dCMP + ATP = dCDP + ADP. In Streptococcus pyogenes serotype M1, this protein is Cytidylate kinase.